We begin with the raw amino-acid sequence, 585 residues long: Probable multidrug resistance ABC transporter ATP-binding/permease protein YheI (585 aa).

Residues 19-304 (YTIAIVLLLA…IGELINVMQR (286 aa)) enclose the ABC transmembrane type-1 domain. A run of 6 helical transmembrane segments spans residues 21-41 (IAIV…KLLG), 57-77 (LLFY…MSYF), 127-147 (AVSL…MFMM), 149-169 (IFLT…IIPL), 249-269 (VKLL…FLVF), and 279-299 (VSFN…GELI). The region spanning 337–572 (IVFSHVSFTY…NGWYREQYER (236 aa)) is the ABC transporter domain. Residue 371-378 (GKTGSGKT) coordinates ATP.

It belongs to the ABC transporter superfamily. Heterodimer composed of YheH and YheI.

Its subcellular location is the cell membrane. Inhibited by ortho-vanadate. Its function is as follows. Involved in the transport of four structurally unrelated drugs, including doxorubicin and mitoxantrone. Transmembrane domains (TMD) form a pore in the membrane and the ATP-binding domain (NBD) is responsible for energy generation. The protein is Probable multidrug resistance ABC transporter ATP-binding/permease protein YheI (yheI) of Bacillus subtilis (strain 168).